A 255-amino-acid chain; its full sequence is tRNA (guanine-N(1)-)-methyltransferase (255 aa).

S-adenosyl-L-methionine is bound by residues Gly-112 and 131–136 (LGDYVL).

The protein belongs to the RNA methyltransferase TrmD family. Homodimer.

The protein localises to the cytoplasm. It catalyses the reaction guanosine(37) in tRNA + S-adenosyl-L-methionine = N(1)-methylguanosine(37) in tRNA + S-adenosyl-L-homocysteine + H(+). Specifically methylates guanosine-37 in various tRNAs. The sequence is that of tRNA (guanine-N(1)-)-methyltransferase from Lacticaseibacillus paracasei (strain ATCC 334 / BCRC 17002 / CCUG 31169 / CIP 107868 / KCTC 3260 / NRRL B-441) (Lactobacillus paracasei).